Consider the following 498-residue polypeptide: uncharacterized protein (498 aa).

329–336 is an ATP binding site; sequence GNPGTGKS.

The protein localises to the secreted. Its subcellular location is the cell wall. This is an uncharacterized protein from Mycobacterium tuberculosis (strain CDC 1551 / Oshkosh).